The following is a 334-amino-acid chain: Ornithine carbamoyltransferase (334 aa).

Residues 56–59 (STRT), Q83, R107, and 134–137 (HPTQ) each bind carbamoyl phosphate. L-ornithine contacts are provided by residues N168, D232, and 236-237 (SM). Carbamoyl phosphate contacts are provided by residues 274-275 (CL) and R320.

This sequence belongs to the aspartate/ornithine carbamoyltransferase superfamily. OTCase family. Homotrimer.

It localises to the cytoplasm. It carries out the reaction carbamoyl phosphate + L-ornithine = L-citrulline + phosphate + H(+). Its pathway is amino-acid biosynthesis; L-arginine biosynthesis; L-arginine from L-ornithine and carbamoyl phosphate: step 1/3. Its function is as follows. Reversibly catalyzes the transfer of the carbamoyl group from carbamoyl phosphate (CP) to the N(epsilon) atom of ornithine (ORN) to produce L-citrulline. The sequence is that of Ornithine carbamoyltransferase (argI) from Salmonella typhimurium (strain LT2 / SGSC1412 / ATCC 700720).